The sequence spans 447 residues: N-succinylarginine dihydrolase (447 aa).

Substrate contacts are provided by residues 19-28 (AGLSFGNEAS), Asn-110, and 137-138 (HR). The active site involves Glu-174. Residue Arg-212 coordinates substrate. The active site involves His-248. Substrate contacts are provided by Asp-250 and Asn-359. The active-site Nucleophile is the Cys-365.

This sequence belongs to the succinylarginine dihydrolase family. In terms of assembly, homodimer.

It carries out the reaction N(2)-succinyl-L-arginine + 2 H2O + 2 H(+) = N(2)-succinyl-L-ornithine + 2 NH4(+) + CO2. It participates in amino-acid degradation; L-arginine degradation via AST pathway; L-glutamate and succinate from L-arginine: step 2/5. Catalyzes the hydrolysis of N(2)-succinylarginine into N(2)-succinylornithine, ammonia and CO(2). The chain is N-succinylarginine dihydrolase from Escherichia coli O139:H28 (strain E24377A / ETEC).